The primary structure comprises 704 residues: Elongation factor G (704 aa).

Residues 8 to 291 enclose the tr-type G domain; the sequence is DKVRNIGIMA…AVVEYLASPV (284 aa). Residues 17-24, 90-94, and 144-147 contribute to the GTP site; these read AHIDAGKT, DTPGH, and NKMD.

Belongs to the TRAFAC class translation factor GTPase superfamily. Classic translation factor GTPase family. EF-G/EF-2 subfamily.

The protein localises to the cytoplasm. In terms of biological role, catalyzes the GTP-dependent ribosomal translocation step during translation elongation. During this step, the ribosome changes from the pre-translocational (PRE) to the post-translocational (POST) state as the newly formed A-site-bound peptidyl-tRNA and P-site-bound deacylated tRNA move to the P and E sites, respectively. Catalyzes the coordinated movement of the two tRNA molecules, the mRNA and conformational changes in the ribosome. The polypeptide is Elongation factor G (Chlorobium phaeobacteroides (strain DSM 266 / SMG 266 / 2430)).